The primary structure comprises 337 residues: Transcription initiation factor IIB (337 aa).

A TFIIB-type zinc finger spans residues 37-68 (EKAVCPECGSRNLVHDYERAELVCGDCGLVID). 4 residues coordinate Zn(2+): Cys41, Cys44, Cys60, and Cys63. A run of 2 repeats spans residues 154–237 (SELD…SREL) and 248–329 (DYVP…ELAE).

The protein belongs to the TFIIB family.

Functionally, stabilizes TBP binding to an archaeal box-A promoter. Also responsible for recruiting RNA polymerase II to the pre-initiation complex (DNA-TBP-TFIIB). The sequence is that of Transcription initiation factor IIB from Methanosarcina mazei (Methanosarcina frisia).